The chain runs to 55 residues: uncharacterized protein (55 aa).

Residues 1–30 are disordered; sequence MDKPTVETSAAPVETLVLTEPPAETQAEDS.

This is an uncharacterized protein from Frog virus 3 (isolate Goorha) (FV-3).